The chain runs to 524 residues: MSSIQLQKYLDLLPENAILNAGIAIAGLSAAYAIGLVIYRLYLSPISKFPGPKIAAATFWYELYYDVIHKGQYFHKIEEMHEKYGPIVRINPHELSIRDPDYYDELYVSGSVRPSDRYEGFVNGVVDFEGSHLATVAHELHRKRRKPLDPYFSRAGVNRLEPMVADLTEELVVKRFEEFKGTGKVVRLDHAFTAYSGDIISALCIDEPPHFTSTPDFTPSWFDLFHSGVVTLPLFMGLPWLIHLIRLIPESILAVIDPGAQNWNTFRMMCYDSIKDTKREKGAQPTKDTSLLGRPTLFRHLVNSDLPASELSDERLLREAQVLIGSGTMTTAGTMCFLVYYIKSNPEIHRRLTEELKPIMEGYPHKKPSWAEIEKAEYLQAVLKEGLRLSFGTIHRRPRVSPNQPLQFKEWVIPAGVPVGMSAYFQHTDPKIFPNPHEFNPDRWLSNVTPAMKKNYVPFSKGSRHCLGMNLAYCELNYIIATMFRPGAVDFDLFETTELDVKPTHDMVVPLPSLKSKGFKVKFN.

The next 3 helical transmembrane spans lie at 18–38 (ILNA…GLVI), 225–245 (FHSG…IHLI), and 322–342 (VLIG…VYYI). Heme is bound at residue Cys466.

The protein belongs to the cytochrome P450 family. It depends on heme as a cofactor.

The protein resides in the membrane. The enzyme catalyses ophiobolin F + 4 reduced [NADPH--hemoprotein reductase] + 4 O2 = ophiobolin C + 4 oxidized [NADPH--hemoprotein reductase] + 6 H2O + 4 H(+). It participates in secondary metabolite biosynthesis; terpenoid biosynthesis. Its function is as follows. Cytochrome P450 monooxygenase; part of the gene cluster that mediates the biosynthesis of the sesterterpenes ophiobolins, fungal phytotoxins with potential anti-cancer activities. The first step of the pathway is performed by the sesterterpene synthase oblA that possesses both prenyl transferase and terpene cyclase activity, converting isopentenyl diphosphate and dimethylallyl diphosphate into geranylfarnesyl diphosphate (GFPP) and further converting GFPP into ophiobolin F, respectively. Other sesterterpenoids (C(25) terpenoids) are found as minor products of oblA. The cytochrome P450 monooxygenase oblB then catalyzes a four-step oxidative transformation of ophiobolin F to yield ophiobolin C. The FAD-dependent oxidoreductase oblC might be involved in a later oxidation step that produces ophiobolin A. The chain is Cytochrome P450 monooxygenase oblB from Cochliobolus heterostrophus (strain C5 / ATCC 48332 / race O) (Southern corn leaf blight fungus).